A 254-amino-acid polypeptide reads, in one-letter code: NAD kinase (254 aa).

The active-site Proton acceptor is Asp-44. Residues 44–45, 114–115, Asp-144, Ala-152, 155–160, and Ala-179 contribute to the NAD(+) site; these read DG, NE, and TAYNYS.

This sequence belongs to the NAD kinase family. A divalent metal cation is required as a cofactor.

The protein resides in the cytoplasm. The catalysed reaction is NAD(+) + ATP = ADP + NADP(+) + H(+). Functionally, involved in the regulation of the intracellular balance of NAD and NADP, and is a key enzyme in the biosynthesis of NADP. Catalyzes specifically the phosphorylation on 2'-hydroxyl of the adenosine moiety of NAD to yield NADP. The sequence is that of NAD kinase from Cereibacter sphaeroides (strain ATCC 17023 / DSM 158 / JCM 6121 / CCUG 31486 / LMG 2827 / NBRC 12203 / NCIMB 8253 / ATH 2.4.1.) (Rhodobacter sphaeroides).